The chain runs to 360 residues: sn-glycerol-3-phosphate import ATP-binding protein UgpC (360 aa).

In terms of domain architecture, ABC transporter spans 4-235 (LSLKGVRKSY…PATTFVASFI (232 aa)). Residue 37 to 44 (GPSGCGKS) participates in ATP binding.

This sequence belongs to the ABC transporter superfamily. sn-glycerol-3-phosphate importer (TC 3.A.1.1.3) family. The complex is composed of two ATP-binding proteins (UgpC), two transmembrane proteins (UgpA and UgpE) and a solute-binding protein (UgpB).

The protein resides in the cell inner membrane. The enzyme catalyses sn-glycerol 3-phosphate(out) + ATP + H2O = sn-glycerol 3-phosphate(in) + ADP + phosphate + H(+). Its function is as follows. Part of the ABC transporter complex UgpBAEC involved in sn-glycerol-3-phosphate (G3P) import. Responsible for energy coupling to the transport system. This chain is sn-glycerol-3-phosphate import ATP-binding protein UgpC, found in Burkholderia thailandensis (strain ATCC 700388 / DSM 13276 / CCUG 48851 / CIP 106301 / E264).